The primary structure comprises 117 residues: Acylphosphatase (117 aa).

Residues 21–107 (RWRFRIRGLV…TGADWFEIRP (87 aa)) enclose the Acylphosphatase-like domain. Active-site residues include Arg-36 and Asn-54.

It belongs to the acylphosphatase family.

The catalysed reaction is an acyl phosphate + H2O = a carboxylate + phosphate + H(+). This is Acylphosphatase (acyP) from Synechococcus sp. (strain RCC307).